The primary structure comprises 310 residues: tRNA pseudouridine synthase B (310 aa).

Residue Asp49 is the Nucleophile of the active site.

It belongs to the pseudouridine synthase TruB family. Type 1 subfamily.

It carries out the reaction uridine(55) in tRNA = pseudouridine(55) in tRNA. Its function is as follows. Responsible for synthesis of pseudouridine from uracil-55 in the psi GC loop of transfer RNAs. The chain is tRNA pseudouridine synthase B from Rhizobium etli (strain ATCC 51251 / DSM 11541 / JCM 21823 / NBRC 15573 / CFN 42).